The sequence spans 504 residues: Galactan beta-1,4-galactosyltransferase GALS3 (504 aa).

Residues 30–50 (LTFMALLVLCTLATLLPFIPS) traverse the membrane as a helical segment. Positions 242–456 (DYLYCGSSLY…YHGSISQRRE (215 aa)) constitute a GT92 domain.

The protein belongs to the glycosyltransferase 92 family. Expressed in root caps, mature leaves, top of the stems and seeds.

It is found in the golgi apparatus membrane. Functionally, involved in the biosynthesis of beta-1,4-galactan. Beta-1,4-galactans are abundant polysaccharides in plant cell walls and are found as side-chain of rhamnogalacturonan I, which is a major component of pectin. The polypeptide is Galactan beta-1,4-galactosyltransferase GALS3 (Arabidopsis thaliana (Mouse-ear cress)).